A 146-amino-acid polypeptide reads, in one-letter code: Hemoglobin subunit beta (146 aa).

Val-1 carries the N-acetylvaline modification. The Globin domain occupies 2–146 (HLTAEEKSAV…VANALAHKYH (145 aa)). Thr-12 is modified (phosphothreonine). The residue at position 59 (Lys-59) is an N6-acetyllysine. His-63 lines the heme b pocket. Lys-82 is modified (N6-acetyllysine). A heme b-binding site is contributed by His-92. Residue Cys-93 is modified to S-nitrosocysteine. Position 144 is an N6-acetyllysine (Lys-144).

This sequence belongs to the globin family. In terms of assembly, heterotetramer of two alpha chains and two beta chains. As to expression, red blood cells.

Its function is as follows. Involved in oxygen transport from the lung to the various peripheral tissues. The sequence is that of Hemoglobin subunit beta (HBB) from Balaenoptera acutorostrata (Common minke whale).